Consider the following 247-residue polypeptide: Ribosomal RNA large subunit methyltransferase E (247 aa).

The interval 1–21 (MKVNPKNSPKDNLKDSPKVSA) is disordered. The segment covering 8 to 17 (SPKDNLKDSP) has biased composition (basic and acidic residues). S-adenosyl-L-methionine is bound by residues Gly-80, Trp-82, Asp-108, Asp-124, and Asp-153. Residue Lys-193 is the Proton acceptor of the active site.

This sequence belongs to the class I-like SAM-binding methyltransferase superfamily. RNA methyltransferase RlmE family.

The protein resides in the cytoplasm. It carries out the reaction uridine(2552) in 23S rRNA + S-adenosyl-L-methionine = 2'-O-methyluridine(2552) in 23S rRNA + S-adenosyl-L-homocysteine + H(+). Functionally, specifically methylates the uridine in position 2552 of 23S rRNA at the 2'-O position of the ribose in the fully assembled 50S ribosomal subunit. The sequence is that of Ribosomal RNA large subunit methyltransferase E from Polaromonas sp. (strain JS666 / ATCC BAA-500).